The sequence spans 89 residues: Small ribosomal subunit protein bS20 (89 aa).

Belongs to the bacterial ribosomal protein bS20 family.

Its function is as follows. Binds directly to 16S ribosomal RNA. This is Small ribosomal subunit protein bS20 from Helicobacter pylori (strain Shi470).